A 100-amino-acid chain; its full sequence is Elevenin (100 aa).

A signal peptide spans 1–24 (MALSQKALLVLVLSMLLTASDSWA). The cysteines at positions 29 and 38 are disulfide-linked. Positions 44–100 (KRGGDSLSVGGSAELDDTLTDPFLKSEEPKEWRELTRLSRVLQTFLSHPTGEMEQHD) are excised as a propeptide.

It belongs to the elevenin family. In terms of assembly, monomer. As to expression, expressed by the venom duct.

It is found in the secreted. In terms of biological role, may mimic the function of prey elevenin neuropeptide. In vivo, intracranial injection in mice induces hyperactivity. The protein is Elevenin of Conus ammiralis (Admiral cone).